A 155-amino-acid chain; its full sequence is Snaclec clone 2100755 (155 aa).

An N-terminal signal peptide occupies residues 1-23 (MGRFIFVSFGLLVVFLSLSGTAA). Cystine bridges form between cysteine 25–cysteine 36, cysteine 53–cysteine 144, and cysteine 119–cysteine 136. The C-type lectin domain maps to 32-145 (YDGHCYQVFS…CEKSVSFVCK (114 aa)).

The protein belongs to the snaclec family. Heterodimer; disulfide-linked.

The protein resides in the secreted. Interferes with one step of hemostasis (modulation of platelet aggregation, or coagulation cascade, for example). The protein is Snaclec clone 2100755 of Deinagkistrodon acutus (Hundred-pace snake).